Consider the following 259-residue polypeptide: Protoheme IX farnesyltransferase (259 aa).

Helical transmembrane passes span 15-35, 61-81, 83-103, 109-129, 137-157, 182-202, 208-228, and 236-256; these read LICLTALLLAAAAAAMINGVL, ATVAAAGMLFAALALSITFLP, LTTALILLAIFSYTPLYTLWF, WGVVPGGIPGALPVLVGASAV, PLILFLVMLLWQPPHFWALAL, VCIFVFAALLLPASLALWFTG, FAIEALCLGFFNLFSCYLYLV, and AFQASIFYLLGLLSAVIIDIC.

The protein belongs to the UbiA prenyltransferase family. Protoheme IX farnesyltransferase subfamily.

It is found in the cell inner membrane. It carries out the reaction heme b + (2E,6E)-farnesyl diphosphate + H2O = Fe(II)-heme o + diphosphate. The protein operates within porphyrin-containing compound metabolism; heme O biosynthesis; heme O from protoheme: step 1/1. Converts heme B (protoheme IX) to heme O by substitution of the vinyl group on carbon 2 of heme B porphyrin ring with a hydroxyethyl farnesyl side group. The polypeptide is Protoheme IX farnesyltransferase (Geotalea uraniireducens (strain Rf4) (Geobacter uraniireducens)).